The chain runs to 277 residues: Acetyl-coenzyme A carboxylase carboxyl transferase subunit beta (277 aa).

Residues 25–277 (LVRRCPVCHT…DLLRLHKGES (253 aa)) enclose the CoA carboxyltransferase N-terminal domain. Residues cysteine 29, cysteine 32, cysteine 47, and cysteine 50 each coordinate Zn(2+). The C4-type zinc finger occupies 29 to 50 (CPVCHTTFLTDHWEPTRLCPAC).

Belongs to the AccD/PCCB family. In terms of assembly, acetyl-CoA carboxylase is a heterohexamer composed of biotin carboxyl carrier protein (AccB), biotin carboxylase (AccC) and two subunits each of ACCase subunit alpha (AccA) and ACCase subunit beta (AccD). Requires Zn(2+) as cofactor.

It is found in the cytoplasm. It carries out the reaction N(6)-carboxybiotinyl-L-lysyl-[protein] + acetyl-CoA = N(6)-biotinyl-L-lysyl-[protein] + malonyl-CoA. It participates in lipid metabolism; malonyl-CoA biosynthesis; malonyl-CoA from acetyl-CoA: step 1/1. Component of the acetyl coenzyme A carboxylase (ACC) complex. Biotin carboxylase (BC) catalyzes the carboxylation of biotin on its carrier protein (BCCP) and then the CO(2) group is transferred by the transcarboxylase to acetyl-CoA to form malonyl-CoA. In Levilactobacillus brevis (strain ATCC 367 / BCRC 12310 / CIP 105137 / JCM 1170 / LMG 11437 / NCIMB 947 / NCTC 947) (Lactobacillus brevis), this protein is Acetyl-coenzyme A carboxylase carboxyl transferase subunit beta.